The primary structure comprises 369 residues: MSYYYNIFTDFISCISSGAVLLIKIMAVIISVMVSVAYLVYMERKVIGAIQLRQGPNVVGPFGLLQPFADAVKLIIKEHIIPFKSNKICFLIAPIITFTLALLGWAVIPFGADVIVNNGHEVIIPNVIANINIGVLYILAISSLGVYGIIIAGWSSNSNYAFLGAIRSASQMISYEVSIGLTIVTVLLATGSLKLGEIVVARHNMPYWIDLLLLPMACVFFISSLAETNRHPFDLPEAESELVSGYNVEYSSMPFALFFLGEYANMILINAMAVIFFFGGWYPPLNISFLYVIPGIIWFVLKIIVLLFCFIWIRATIPRYRYDQLMRLGWKVFLPISLLWVVLVSGVLLYTDSLPRNAYGIQYVHDLDQ.

A run of 8 helical transmembrane segments spans residues 20-40 (VLLI…AYLV), 88-108 (ICFL…WAVI), 133-153 (IGVL…IIAG), 179-199 (IGLT…GEIV), 205-225 (MPYW…ISSL), 267-287 (ILIN…PLNI), 293-313 (IPGI…FIWI), and 328-348 (LGWK…SGVL).

Belongs to the complex I subunit 1 family. In terms of assembly, NDH-1 is composed of 14 different subunits. Subunits NuoA, H, J, K, L, M, N constitute the membrane sector of the complex.

It is found in the cell inner membrane. It carries out the reaction a quinone + NADH + 5 H(+)(in) = a quinol + NAD(+) + 4 H(+)(out). In terms of biological role, NDH-1 shuttles electrons from NADH, via FMN and iron-sulfur (Fe-S) centers, to quinones in the respiratory chain. The immediate electron acceptor for the enzyme in this species is believed to be ubiquinone. Couples the redox reaction to proton translocation (for every two electrons transferred, four hydrogen ions are translocated across the cytoplasmic membrane), and thus conserves the redox energy in a proton gradient. This subunit may bind ubiquinone. The polypeptide is NADH-quinone oxidoreductase subunit H (Ehrlichia canis (strain Jake)).